Reading from the N-terminus, the 51-residue chain is Protein Tat (51 aa).

The span at 1 to 25 (EAETATKSCSGRQANQVSLPKQPAS) shows a compositional bias: polar residues. The disordered stretch occupies residues 1–51 (EAETATKSCSGRQANQVSLPKQPASQPRGDPTGPKESKKKVETETETDPVN). Lysine 21 is covalently cross-linked (Glycyl lysine isopeptide (Lys-Gly) (interchain with G-Cter in ubiquitin)). A Cell attachment site motif is present at residues 28-30 (RGD). A compositionally biased stretch (basic and acidic residues) spans 33–43 (GPKESKKKVET).

This sequence belongs to the lentiviruses Tat family. In terms of assembly, interacts with host CCNT1. Associates with the P-TEFb complex composed at least of Tat, P-TEFb (CDK9 and CCNT1), TAR RNA, RNA Pol II. Recruits the HATs CREBBP, TAF1/TFIID, EP300, PCAF and GCN5L2. Interacts with host KAT5/Tip60; this interaction targets the latter to degradation. Interacts with the host deacetylase SIRT1. Interacts with host capping enzyme RNGTT; this interaction stimulates RNGTT. Binds to host KDR, and to the host integrins ITGAV/ITGB3 and ITGA5/ITGB1. Interacts with host KPNB1/importin beta-1 without previous binding to KPNA1/importin alpha-1. Interacts with EIF2AK2. Interacts with host nucleosome assembly protein NAP1L1; this interaction may be required for the transport of Tat within the nucleus, since the two proteins interact at the nuclear rim. Interacts with host C1QBP/SF2P32; this interaction involves lysine-acetylated Tat. Interacts with the host chemokine receptors CCR2, CCR3 and CXCR4. Interacts with host DPP4/CD26; this interaction may trigger an anti-proliferative effect. Interacts with host LDLR. Interacts with the host extracellular matrix metalloproteinase MMP1. Interacts with host PRMT6; this interaction mediates Tat's methylation. Interacts with, and is ubiquitinated by MDM2/Hdm2. Interacts with host PSMC3 and HTATIP2. Interacts with STAB1; this interaction may overcome SATB1-mediated repression of IL2 and IL2RA (interleukin) in T cells by binding to the same domain than HDAC1. Interacts (when acetylated) with human CDK13, thereby increasing HIV-1 mRNA splicing and promoting the production of the doubly spliced HIV-1 protein Nef. In terms of processing, acetylation by EP300, CREBBP, GCN5L2/GCN5 and PCAF regulates the transactivation activity of Tat. Post-translationally, phosphorylated by EIF2AK2 on serine and threonine residues adjacent to the basic region important for TAR RNA binding and function. Phosphorylation of Tat by EIF2AK2 is dependent on the prior activation of EIF2AK2 by dsRNA. Asymmetrical arginine methylation by host PRMT6 seems to diminish the transactivation capacity of Tat and affects the interaction with host CCNT1. In terms of processing, polyubiquitination by MDM2 does not target Tat to degradation, but activates its transactivation function and fosters interaction with CCNT1 and TAR RNA.

The protein resides in the host nucleus. It localises to the host nucleolus. The protein localises to the host cytoplasm. Its subcellular location is the secreted. In terms of biological role, transcriptional activator that increases RNA Pol II processivity, thereby increasing the level of full-length viral transcripts. Recognizes a hairpin structure at the 5'-LTR of the nascent viral mRNAs referred to as the transactivation responsive RNA element (TAR) and recruits the cyclin T1-CDK9 complex (P-TEFb complex) that will in turn hyperphosphorylate the RNA polymerase II to allow efficient elongation. The CDK9 component of P-TEFb and other Tat-activated kinases hyperphosphorylate the C-terminus of RNA Pol II that becomes stabilized and much more processive. Other factors such as HTATSF1/Tat-SF1, SUPT5H/SPT5, and HTATIP2 are also important for Tat's function. Besides its effect on RNA Pol II processivity, Tat induces chromatin remodeling of proviral genes by recruiting the histone acetyltransferases (HATs) CREBBP, EP300 and PCAF to the chromatin. This also contributes to the increase in proviral transcription rate, especially when the provirus integrates in transcriptionally silent region of the host genome. To ensure maximal activation of the LTR, Tat mediates nuclear translocation of NF-kappa-B by interacting with host RELA. Through its interaction with host TBP, Tat may also modulate transcription initiation. Tat can reactivate a latently infected cell by penetrating in it and transactivating its LTR promoter. In the cytoplasm, Tat is thought to act as a translational activator of HIV-1 mRNAs. Functionally, extracellular circulating Tat can be endocytosed by surrounding uninfected cells via the binding to several surface receptors such as CD26, CXCR4, heparan sulfate proteoglycans (HSPG) or LDLR. Neurons are rarely infected, but they internalize Tat via their LDLR. Endosomal low pH allows Tat to cross the endosome membrane to enter the cytosol and eventually further translocate into the nucleus, thereby inducing severe cell dysfunctions ranging from cell activation to cell death. Through its interaction with nuclear HATs, Tat is potentially able to control the acetylation-dependent cellular gene expression. Tat seems to inhibit the HAT activity of KAT5/Tip60 and TAF1, and consequently modify the expression of specific cellular genes. Modulates the expression of many cellular genes involved in cell survival, proliferation or in coding for cytokines (such as IL10) or cytokine receptors. May be involved in the derepression of host interleukin IL2 expression. Mediates the activation of cyclin-dependent kinases and dysregulation of microtubule network. Tat plays a role in T-cell and neurons apoptosis. Tat induced neurotoxicity and apoptosis probably contribute to neuroAIDS. Host extracellular matrix metalloproteinase MMP1 cleaves Tat and decreases Tat's mediated neurotoxicity. Circulating Tat also acts as a chemokine-like and/or growth factor-like molecule that binds to specific receptors on the surface of the cells, affecting many cellular pathways. In the vascular system, Tat binds to ITGAV/ITGB3 and ITGA5/ITGB1 integrins dimers at the surface of endothelial cells and competes with bFGF for heparin-binding sites, leading to an excess of soluble bFGF. Binds to KDR/VEGFR-2. All these Tat-mediated effects enhance angiogenesis in Kaposi's sarcoma lesions. In Homo sapiens (Human), this protein is Protein Tat.